Here is a 303-residue protein sequence, read N- to C-terminus: D-alanine--D-alanine ligase (303 aa).

One can recognise an ATP-grasp domain in the interval 102 to 298 (RILLAAAGLP…YPELCDWMVR (197 aa)). Residue 128–181 (PLPAPYVIKPVAEGSSVGVEIVRTGDNRRAEIARTWRFGKEALVESFIPGRELT) participates in ATP binding. Positions 251, 265, and 267 each coordinate Mg(2+).

This sequence belongs to the D-alanine--D-alanine ligase family. Mg(2+) serves as cofactor. The cofactor is Mn(2+).

The protein resides in the cytoplasm. The enzyme catalyses 2 D-alanine + ATP = D-alanyl-D-alanine + ADP + phosphate + H(+). The protein operates within cell wall biogenesis; peptidoglycan biosynthesis. In terms of biological role, cell wall formation. This is D-alanine--D-alanine ligase from Gluconobacter oxydans (strain 621H) (Gluconobacter suboxydans).